The chain runs to 536 residues: Phosphoenolpyruvate carboxykinase (ATP) (536 aa).

Substrate contacts are provided by R62, Y203, and K209. ATP-binding positions include K209, H228, and 244-252 (GLSGTGKTT). Mn(2+) contacts are provided by K209 and H228. D265 contributes to the Mn(2+) binding site. Residues E293, R329, 445–446 (RI), and T451 contribute to the ATP site. R329 contacts substrate.

It belongs to the phosphoenolpyruvate carboxykinase (ATP) family. As to quaternary structure, monomer. Mn(2+) is required as a cofactor.

The protein resides in the cytoplasm. The catalysed reaction is oxaloacetate + ATP = phosphoenolpyruvate + ADP + CO2. The protein operates within carbohydrate biosynthesis; gluconeogenesis. Involved in the gluconeogenesis. Catalyzes the conversion of oxaloacetate (OAA) to phosphoenolpyruvate (PEP) through direct phosphoryl transfer between the nucleoside triphosphate and OAA. The sequence is that of Phosphoenolpyruvate carboxykinase (ATP) from Actinobacillus pleuropneumoniae serotype 7 (strain AP76).